We begin with the raw amino-acid sequence, 433 residues long: Serine hydroxymethyltransferase (433 aa).

(6S)-5,6,7,8-tetrahydrofolate contacts are provided by residues L132 and 136–138 (GHL). At K241 the chain carries N6-(pyridoxal phosphate)lysine.

The protein belongs to the SHMT family. As to quaternary structure, homodimer. Pyridoxal 5'-phosphate is required as a cofactor.

The protein resides in the cytoplasm. The catalysed reaction is (6R)-5,10-methylene-5,6,7,8-tetrahydrofolate + glycine + H2O = (6S)-5,6,7,8-tetrahydrofolate + L-serine. The protein operates within one-carbon metabolism; tetrahydrofolate interconversion. It functions in the pathway amino-acid biosynthesis; glycine biosynthesis; glycine from L-serine: step 1/1. Catalyzes the reversible interconversion of serine and glycine with tetrahydrofolate (THF) serving as the one-carbon carrier. This reaction serves as the major source of one-carbon groups required for the biosynthesis of purines, thymidylate, methionine, and other important biomolecules. Also exhibits THF-independent aldolase activity toward beta-hydroxyamino acids, producing glycine and aldehydes, via a retro-aldol mechanism. This is Serine hydroxymethyltransferase from Afipia carboxidovorans (strain ATCC 49405 / DSM 1227 / KCTC 32145 / OM5) (Oligotropha carboxidovorans).